The primary structure comprises 540 residues: Chaperonin GroEL 2 (540 aa).

ATP-binding positions include 29-32 (TMGP), Lys-50, 86-90 (DGTTT), Gly-414, and Asp-496.

Belongs to the chaperonin (HSP60) family. As to quaternary structure, forms a cylinder of 14 subunits composed of two heptameric rings stacked back-to-back. Interacts with the co-chaperonin GroES.

It is found in the cytoplasm. The catalysed reaction is ATP + H2O + a folded polypeptide = ADP + phosphate + an unfolded polypeptide.. Its function is as follows. Together with its co-chaperonin GroES, plays an essential role in assisting protein folding. The GroEL-GroES system forms a nano-cage that allows encapsulation of the non-native substrate proteins and provides a physical environment optimized to promote and accelerate protein folding. The chain is Chaperonin GroEL 2 from Rhodopirellula baltica (strain DSM 10527 / NCIMB 13988 / SH1).